The following is a 612-amino-acid chain: Indole-3-acetic acid-amido synthetase GH3.6 (612 aa).

Belongs to the IAA-amido conjugating enzyme family. Expressed in cotyledons, stipules, true leaves, hypocotyls, and all parts of the roots. Not detected in flowers.

In terms of biological role, catalyzes the synthesis of indole-3-acetic acid (IAA)-amino acid conjugates, providing a mechanism for the plant to cope with the presence of excess auxin. Strongly reactive with Glu, Gln, Trp, Asp, Ala, Leu, Phe, Gly, Tyr, Met, Ile and Val. Little or no product formation with His, Ser, Thr, Arg, Lys, or Cys. Also active on pyruvic and butyric acid analogs of IAA, PAA and the synthetic auxin naphthaleneacetic acid (NAA). The two chlorinated synthetic auxin herbicides 2,4-D and 3,6-dichloro-o-anisic acid (dicamba) cannot be used as substrates. Involved in auxin signal transduction. Inhibits shoot and hypocotyl cell elongation, and lateral root cell differentiation in light. The protein is Indole-3-acetic acid-amido synthetase GH3.6 (GH3.6) of Arabidopsis thaliana (Mouse-ear cress).